Here is a 451-residue protein sequence, read N- to C-terminus: Bifunctional protein GlmU (451 aa).

The interval 1–229 is pyrophosphorylase; it reads MERFAVILAA…FDETIGVNDR (229 aa). UDP-N-acetyl-alpha-D-glucosamine-binding positions include 8–11, K22, Q72, and 77–78; these read LAAG and GT. Residue D102 participates in Mg(2+) binding. UDP-N-acetyl-alpha-D-glucosamine-binding residues include G139, E154, N169, and N227. Mg(2+) is bound at residue N227. The segment at 230-250 is linker; that stretch reads VALSQAEAIMRKRTNERLMRE. Positions 251–451 are N-acetyltransferase; it reads GVTFMDPAST…QTNKEGYTKR (201 aa). UDP-N-acetyl-alpha-D-glucosamine is bound by residues R332 and K350. H362 serves as the catalytic Proton acceptor. UDP-N-acetyl-alpha-D-glucosamine contacts are provided by Y365 and N376. Acetyl-CoA is bound by residues 385–386, A422, and R439; that span reads NY.

This sequence in the N-terminal section; belongs to the N-acetylglucosamine-1-phosphate uridyltransferase family. The protein in the C-terminal section; belongs to the transferase hexapeptide repeat family. In terms of assembly, homotrimer. Requires Mg(2+) as cofactor.

It is found in the cytoplasm. It catalyses the reaction alpha-D-glucosamine 1-phosphate + acetyl-CoA = N-acetyl-alpha-D-glucosamine 1-phosphate + CoA + H(+). It carries out the reaction N-acetyl-alpha-D-glucosamine 1-phosphate + UTP + H(+) = UDP-N-acetyl-alpha-D-glucosamine + diphosphate. The protein operates within nucleotide-sugar biosynthesis; UDP-N-acetyl-alpha-D-glucosamine biosynthesis; N-acetyl-alpha-D-glucosamine 1-phosphate from alpha-D-glucosamine 6-phosphate (route II): step 2/2. Its pathway is nucleotide-sugar biosynthesis; UDP-N-acetyl-alpha-D-glucosamine biosynthesis; UDP-N-acetyl-alpha-D-glucosamine from N-acetyl-alpha-D-glucosamine 1-phosphate: step 1/1. It participates in bacterial outer membrane biogenesis; LPS lipid A biosynthesis. In terms of biological role, catalyzes the last two sequential reactions in the de novo biosynthetic pathway for UDP-N-acetylglucosamine (UDP-GlcNAc). The C-terminal domain catalyzes the transfer of acetyl group from acetyl coenzyme A to glucosamine-1-phosphate (GlcN-1-P) to produce N-acetylglucosamine-1-phosphate (GlcNAc-1-P), which is converted into UDP-GlcNAc by the transfer of uridine 5-monophosphate (from uridine 5-triphosphate), a reaction catalyzed by the N-terminal domain. This is Bifunctional protein GlmU from Exiguobacterium sp. (strain ATCC BAA-1283 / AT1b).